Consider the following 949-residue polypeptide: Valine--tRNA ligase (949 aa).

The 'HIGH' region signature appears at P45 to H55. The short motif at K561–S565 is the 'KMSKS' region element. Residue K564 coordinates ATP. Residues E882 to P949 adopt a coiled-coil conformation.

The protein belongs to the class-I aminoacyl-tRNA synthetase family. ValS type 1 subfamily. Monomer.

It localises to the cytoplasm. The enzyme catalyses tRNA(Val) + L-valine + ATP = L-valyl-tRNA(Val) + AMP + diphosphate. Catalyzes the attachment of valine to tRNA(Val). As ValRS can inadvertently accommodate and process structurally similar amino acids such as threonine, to avoid such errors, it has a 'posttransfer' editing activity that hydrolyzes mischarged Thr-tRNA(Val) in a tRNA-dependent manner. The polypeptide is Valine--tRNA ligase (Protochlamydia amoebophila (strain UWE25)).